Consider the following 322-residue polypeptide: NADH-quinone oxidoreductase subunit H (322 aa).

Helical transmembrane passes span 15–35, 81–101, 114–134, 149–169, 184–204, 237–257, 265–285, and 299–319; these read IFQSIVILVCVLITASIMSVV, ITFLIAPILAFISLLLVITII, IGVLFFLMMASLSVYSVLLAG, ATAQTLSYEVFLGLSCMGVVA, IGLWNIIPQFFGFLAFFIAGL, FFIGEYISIIVVSSLISTMFF, FPSYFWFILKTLCFMMIFILI, and LFGWKVCFPLTLINLIFTALI.

It belongs to the complex I subunit 1 family. As to quaternary structure, NDH-1 is composed of 13 different subunits. Subunits NuoA, H, J, K, L, M, N constitute the membrane sector of the complex.

Its subcellular location is the cell membrane. The catalysed reaction is a quinone + NADH + 5 H(+)(in) = a quinol + NAD(+) + 4 H(+)(out). Its function is as follows. NDH-1 shuttles electrons from NADH, via FMN and iron-sulfur (Fe-S) centers, to quinones in the respiratory chain. The immediate electron acceptor for the enzyme in this species is believed to be ubiquinone. Couples the redox reaction to proton translocation (for every two electrons transferred, four hydrogen ions are translocated across the cytoplasmic membrane), and thus conserves the redox energy in a proton gradient. This subunit may bind ubiquinone. The sequence is that of NADH-quinone oxidoreductase subunit H from Buchnera aphidicola subsp. Baizongia pistaciae (strain Bp).